The primary structure comprises 142 residues: MAKKVQAYVKLQVAAGMANPSPPVGPALGQQGVNIMEFCKAFNAKTDSIEKGLPIPVVITVYSDRSFTFVTKTPPAAVLLKKAAGIKSGSGKPNKDKVGKVTRAQVREIAETKAADMTGSDVEAMTRSIEGTARSMGLVVED.

It belongs to the universal ribosomal protein uL11 family. In terms of assembly, part of the ribosomal stalk of the 50S ribosomal subunit. Interacts with L10 and the large rRNA to form the base of the stalk. L10 forms an elongated spine to which L12 dimers bind in a sequential fashion forming a multimeric L10(L12)X complex. Post-translationally, one or more lysine residues are methylated.

Functionally, forms part of the ribosomal stalk which helps the ribosome interact with GTP-bound translation factors. This Serratia marcescens protein is Large ribosomal subunit protein uL11.